Reading from the N-terminus, the 639-residue chain is Probable potassium transport system protein Kup 1 (639 aa).

The segment covering 1–16 (MALANTGSEAEPVEQS) has biased composition (polar residues). Positions 1–21 (MALANTGSEAEPVEQSSHPEI) are disordered. The next 12 membrane-spanning stretches (helical) occupy residues 29-49 (LMLGALGVVYGDIGTSPIYAF), 67-87 (ILGVLSLIIWSLTIIVTIKYI), 117-137 (AVILGIGIVGASLFFGDAVIT), 154-174 (PTFQPYVVPLTLVILAVVFAV), 182-202 (VGLVFGPVTAVWFLAIGLSGL), 220-240 (IVAFLIHSPDVAFVTIGAIFL), 260-280 (IVLAWLSIVFPCLLLNYAGQG), 302-322 (ALIPMVVLATAATVIASQAVI), 354-374 (IYMPRVNLLLALVVMMLVVGF), 383-403 (AYGISVTGNMLVTTVLLYVVM), 411-431 (LWVAISLTVLFAFIDIGFFAS), and 436-456 (VFEGGWASLLVAFTIVLGMWT).

The protein belongs to the HAK/KUP transporter (TC 2.A.72) family.

The protein localises to the cell inner membrane. The enzyme catalyses K(+)(in) + H(+)(in) = K(+)(out) + H(+)(out). Its function is as follows. Transport of potassium into the cell. Likely operates as a K(+):H(+) symporter. The polypeptide is Probable potassium transport system protein Kup 1 (Mesorhizobium japonicum (strain LMG 29417 / CECT 9101 / MAFF 303099) (Mesorhizobium loti (strain MAFF 303099))).